A 328-amino-acid chain; its full sequence is NADH-quinone oxidoreductase subunit H (328 aa).

8 helical membrane-spanning segments follow: residues 10-30, 80-100, 118-138, 155-175, 191-211, 243-263, 272-292, and 306-326; these read IIKI…GTYF, IAPV…PFLP, IGIL…LLGG, AVFI…IMMV, ITSW…IAAF, LFFI…SLLF, LLGA…FLWT, and WLCW…TAIV.

The protein belongs to the complex I subunit 1 family. NDH-1 is composed of 14 different subunits. Subunits NuoA, H, J, K, L, M, N constitute the membrane sector of the complex.

It localises to the cell inner membrane. The enzyme catalyses a quinone + NADH + 5 H(+)(in) = a quinol + NAD(+) + 4 H(+)(out). In terms of biological role, NDH-1 shuttles electrons from NADH, via FMN and iron-sulfur (Fe-S) centers, to quinones in the respiratory chain. The immediate electron acceptor for the enzyme in this species is believed to be ubiquinone. Couples the redox reaction to proton translocation (for every two electrons transferred, four hydrogen ions are translocated across the cytoplasmic membrane), and thus conserves the redox energy in a proton gradient. This subunit may bind ubiquinone. The sequence is that of NADH-quinone oxidoreductase subunit H from Sulfurimonas denitrificans (strain ATCC 33889 / DSM 1251) (Thiomicrospira denitrificans (strain ATCC 33889 / DSM 1251)).